We begin with the raw amino-acid sequence, 430 residues long: Adenylosuccinate synthetase (430 aa).

GTP contacts are provided by residues 13 to 19 and 41 to 43; these read GDEGKGK and GHT. The active-site Proton acceptor is Asp14. Residues Asp14 and Gly41 each coordinate Mg(2+). Residues 14–17, 39–42, Thr130, Arg144, Gln225, Thr240, and Arg304 contribute to the IMP site; these read DEGK and NAGH. The active-site Proton donor is the His42. A substrate-binding site is contributed by 300–306; it reads STTGRAR. Residues Arg306, 332-334, and 414-416 contribute to the GTP site; these read KLD and STG.

Belongs to the adenylosuccinate synthetase family. Homodimer. Mg(2+) is required as a cofactor.

It is found in the cytoplasm. It carries out the reaction IMP + L-aspartate + GTP = N(6)-(1,2-dicarboxyethyl)-AMP + GDP + phosphate + 2 H(+). The protein operates within purine metabolism; AMP biosynthesis via de novo pathway; AMP from IMP: step 1/2. In terms of biological role, plays an important role in the de novo pathway of purine nucleotide biosynthesis. Catalyzes the first committed step in the biosynthesis of AMP from IMP. The protein is Adenylosuccinate synthetase of Pseudomonas entomophila (strain L48).